We begin with the raw amino-acid sequence, 41 residues long: Large ribosomal subunit protein bL36B (41 aa).

Belongs to the bacterial ribosomal protein bL36 family.

This chain is Large ribosomal subunit protein bL36B, found in Haemophilus ducreyi (strain 35000HP / ATCC 700724).